A 577-amino-acid chain; its full sequence is Signal peptide peptidase-like 2B (577 aa).

The first 19 residues, 1-19 (MAAARLAASLLLLAAQVAC), serve as a signal peptide directing secretion. Residues 20–168 (EFGVLRVVPQ…APSEPVMDYN (149 aa)) are Lumenal-facing. Positions 49–149 (LPHDLNKVSL…RDLQDIFRRF (101 aa)) constitute a PA domain. The N-linked (GlcNAc...) asparagine glycan is linked to asparagine 91. A helical transmembrane segment spans residues 169-189 (MVIIFIMAVGTVALGGYWAGS). Residues 190–216 (HDVKKYMKHKRDDVPEKQEDEAVDVTP) are Cytoplasmic-facing. Residues 217-237 (VMICVFVVMCCFMLVLLYYFY) form a helical membrane-spanning segment. Residues 238 to 239 (DR) are Lumenal-facing. The helical transmembrane segment at 240–260 (LVYVIIGIFCLASSTGLYSCL) threads the bilayer. The Cytoplasmic segment spans residues 261-286 (APCVRKLPFCTCRVPDNNLPYFHKRP). A helical membrane pass occupies residues 287–307 (QARMLLLALFCVTVSVVWGVF). Residues 308-312 (RNEDQ) are Lumenal-facing. The helical transmembrane segment at 313 to 333 (WAWVLQDTLGIAFCLYMLRTI) threads the bilayer. Residues 334–341 (RLPTFKAC) are Cytoplasmic-facing. A helical membrane pass occupies residues 342-362 (TLLLLVLFVYDIFFVFITPYL). Aspartate 352 is a catalytic residue. Over 363–405 (TKSGNSIMVEVATGPSNSSTHEKLPMVLKVPRLNTSPLSLCDR) the chain is Lumenal. A helical membrane pass occupies residues 406-426 (PFSLLGFGDILVPGLLVAYCH). Aspartate 414 is a catalytic residue. Over 427–438 (RFDIQVQSSRIY) the chain is Cytoplasmic. Residues 439–459 (FVACTIAYGLGLLVTFVALVL) form a helical membrane-spanning segment. Topologically, residues 460–463 (MRHG) are lumenal. A helical transmembrane segment spans residues 464–484 (QPALLYLVPCTLLTSCTVALW). A PAL motif is present at residues 465-467 (PAL). Residues 485-577 (RREMGAFWTG…IPVVTPGTSA (93 aa)) are Cytoplasmic-facing. A disordered region spans residues 502–577 (QTPWAAPQGP…IPVVTPGTSA (76 aa)).

It belongs to the peptidase A22B family. In terms of assembly, monomer. Homodimer. Interacts with ITM2B and TNF. Glycosylated.

The protein resides in the cell membrane. Its subcellular location is the golgi apparatus membrane. It localises to the lysosome membrane. The protein localises to the endosome membrane. It is found in the membrane. Functionally, intramembrane-cleaving aspartic protease (I-CLiP) that cleaves type II membrane signal peptides in the hydrophobic plane of the membrane. Functions in ITM2B and TNF processing. Catalyzes the intramembrane cleavage of the anchored fragment of shed TNF-alpha (TNF), which promotes the release of the intracellular domain (ICD) for signaling to the nucleus. May play a role in the regulation of innate and adaptive immunity. In Rattus norvegicus (Rat), this protein is Signal peptide peptidase-like 2B.